A 233-amino-acid chain; its full sequence is Lipoprotein-releasing system ATP-binding protein LolD (233 aa).

Residues 10–233 form the ABC transporter domain; sequence YRLEGVGKEY…AGELYDQHRP (224 aa). ATP is bound at residue 46 to 53; it reads GASGSGKS.

Belongs to the ABC transporter superfamily. Lipoprotein translocase (TC 3.A.1.125) family. In terms of assembly, the complex is composed of two ATP-binding proteins (LolD) and two transmembrane proteins (LolC and LolE).

The protein resides in the cell inner membrane. Functionally, part of the ABC transporter complex LolCDE involved in the translocation of mature outer membrane-directed lipoproteins, from the inner membrane to the periplasmic chaperone, LolA. Responsible for the formation of the LolA-lipoprotein complex in an ATP-dependent manner. In Nitratidesulfovibrio vulgaris (strain ATCC 29579 / DSM 644 / CCUG 34227 / NCIMB 8303 / VKM B-1760 / Hildenborough) (Desulfovibrio vulgaris), this protein is Lipoprotein-releasing system ATP-binding protein LolD.